Here is a 311-residue protein sequence, read N- to C-terminus: Tricarboxylate transport protein, mitochondrial (311 aa).

The propeptide at 1-13 is removed in mature form; sequence MAAPRAPRALTAA. Solcar repeat units follow at residues 23-111, 122-208, and 218-303; these read THPG…LSNH, RRGL…LRNW, and MNPL…VVKL. Helical transmembrane passes span 29 to 46, 86 to 105, and 129 to 143; these read ILAG…TFPT, GLSS…FGMF, and LGAG…VCPM. Ser156 is subject to Phosphoserine. The next 3 helical transmembrane spans lie at 183–202, 224–241, and 278–297; these read GLTA…FFVM, GVFG…NTPL, and GTVP…FVIY.

The protein belongs to the mitochondrial carrier (TC 2.A.29) family. Possesses a short cleavable presequence, which, however, is found to be dispensable both for targeting to mitochondria and insertion into the inner membrane. However, the presequence is required to keep SLC25A1 in a soluble state and thus in an import-competent state. Mature SLC25A1 lacking the presequence is prone to aggregation.

The protein localises to the mitochondrion inner membrane. The catalysed reaction is (S)-malate(in) + citrate(out) = (S)-malate(out) + citrate(in). It catalyses the reaction citrate(out) + succinate(in) = citrate(in) + succinate(out). The enzyme catalyses D-threo-isocitrate(in) + citrate(out) = D-threo-isocitrate(out) + citrate(in). It carries out the reaction cis-aconitate(in) + citrate(out) = cis-aconitate(out) + citrate(in). The catalysed reaction is trans-aconitate(in) + citrate(out) = trans-aconitate(out) + citrate(in). It catalyses the reaction phosphoenolpyruvate(in) + citrate(out) = phosphoenolpyruvate(out) + citrate(in). The enzyme catalyses maleate(in) + citrate(out) = maleate(out) + citrate(in). Mitochondrial electroneutral antiporter that exports citrate from the mitochondria into the cytosol in exchange for malate. Also able to mediate the exchange of citrate for isocitrate, phosphoenolpyruvate, cis-aconitate and to a lesser extent trans-aconitate, maleate and succinate. In the cytoplasm, citrate plays important roles in fatty acid and sterol synthesis, regulation of glycolysis, protein acetylation, and other physiopathological processes. This chain is Tricarboxylate transport protein, mitochondrial (Slc25a1), found in Rattus norvegicus (Rat).